A 441-amino-acid chain; its full sequence is CBL-interacting serine/threonine-protein kinase 6 (441 aa).

Residues 24-278 (YELGRLLGHG…IEKVMDSPWF (255 aa)) enclose the Protein kinase domain. Residues 30–38 (LGHGTFAKV) and K53 contribute to the ATP site. The Proton acceptor role is filled by D146. The tract at residues 164–193 (DFGLSAFTEHLKQDGLLHTTCGTPAYVAPE) is activation loop. Phosphoserine is present on S168. T182 is modified (phosphothreonine). The NAF domain maps to 310-334 (EETETLNAFHIIALSEGFDLSPLFE). The tract at residues 341-371 (KREMRFATSRPASSVISSLEEAARVGNKFDV) is PPI.

It belongs to the protein kinase superfamily. CAMK Ser/Thr protein kinase family. SNF1 subfamily. As to quaternary structure, part of a K(+)-channel calcium-sensing kinase/phosphatase complex composed by a calcium sensor CBL (CBL1, CBL2, CBL3 or CBL9), a kinase CIPK (CIPK6, CIPK16 or CIPK23), a phosphatase PP2C (AIP1) and a K(+)-channel (AKT1). Interacts with AKT1, AKT2,CBL1, CBL2, CBL3, CBL4/SOS3 and CBL9. It depends on Mn(2+) as a cofactor. In terms of processing, autophosphorylated. In terms of tissue distribution, expressed in roots and shoots.

It is found in the endoplasmic reticulum. The catalysed reaction is L-seryl-[protein] + ATP = O-phospho-L-seryl-[protein] + ADP + H(+). It carries out the reaction L-threonyl-[protein] + ATP = O-phospho-L-threonyl-[protein] + ADP + H(+). Its function is as follows. CIPK serine-threonine protein kinases interact with CBL proteins. Binding of a CBL protein to the regulatory NAF domain of CIPK protein lead to the activation of the kinase in a calcium-dependent manner. Downstream of CBL1, CBL2, CBL3 and CBL9, regulates by phosphorylation the K(+) conductance and uptake of AKT1. Binds to CBL4 to modulate AKT2 activity by promoting a kinase interaction-dependent but phosphorylation-independent translocation of the channel to the plasma membrane. The chain is CBL-interacting serine/threonine-protein kinase 6 (CIPK6) from Arabidopsis thaliana (Mouse-ear cress).